The following is a 1099-amino-acid chain: Ras-associating and dilute domain-containing protein (1099 aa).

Residues 90–193 (APGVLKVFGD…RRFELRKKSD (104 aa)) enclose the Ras-associating domain. The segment at 221-265 (AKGTPALTSEAAQSSPPTRLRRTVSETSLSPAPSLPEAAQRPEEP) is disordered. Positions 226-237 (ALTSEAAQSSPP) are enriched in polar residues. Residues S235, S245, S248, and S250 each carry the phosphoserine modification. Residues 302 to 377 (HTVGQRTPSS…LQHGDLLSLG (76 aa)) enclose the FHA domain. S422 and S432 each carry phosphoserine. The Dilute domain maps to 525 to 792 (ADLVPDLQHI…PDGPEAFQSE (268 aa)). Residues 868-941 (GHGCPLANRD…STPLGLEPAG (74 aa)) are disordered. The residue at position 915 (S915) is a Phosphoserine. A compositionally biased stretch (polar residues) spans 916-927 (QAGSLHTDSSCM). A PDZ domain is found at 1000–1085 (MVELERGPSG…KMRFLVAKSD (86 aa)).

Belongs to the RADIL family. In terms of assembly, interacts with RAP1A; in a GTP-dependent manner. Does not interact with members of the Ras family. Interacts (via PDZ domain) with KIF14; is recruited to the microtubule network restricting its interaction with activated RAP1A.

Its function is as follows. Downstream effector of Rap required for cell adhesion and migration of neural crest precursors during development. The polypeptide is Ras-associating and dilute domain-containing protein (Radil) (Mus musculus (Mouse)).